The following is a 191-amino-acid chain: Holliday junction branch migration complex subunit RuvA (191 aa).

A domain I region spans residues Met1–Pro63. Positions Asp64–Leu136 are domain II. Positions Leu136–Lys140 are flexible linker. A domain III region spans residues Val141–Arg191.

This sequence belongs to the RuvA family. In terms of assembly, homotetramer. Forms an RuvA(8)-RuvB(12)-Holliday junction (HJ) complex. HJ DNA is sandwiched between 2 RuvA tetramers; dsDNA enters through RuvA and exits via RuvB. An RuvB hexamer assembles on each DNA strand where it exits the tetramer. Each RuvB hexamer is contacted by two RuvA subunits (via domain III) on 2 adjacent RuvB subunits; this complex drives branch migration. In the full resolvosome a probable DNA-RuvA(4)-RuvB(12)-RuvC(2) complex forms which resolves the HJ.

The protein localises to the cytoplasm. The RuvA-RuvB-RuvC complex processes Holliday junction (HJ) DNA during genetic recombination and DNA repair, while the RuvA-RuvB complex plays an important role in the rescue of blocked DNA replication forks via replication fork reversal (RFR). RuvA specifically binds to HJ cruciform DNA, conferring on it an open structure. The RuvB hexamer acts as an ATP-dependent pump, pulling dsDNA into and through the RuvAB complex. HJ branch migration allows RuvC to scan DNA until it finds its consensus sequence, where it cleaves and resolves the cruciform DNA. The protein is Holliday junction branch migration complex subunit RuvA of Thermus thermophilus (strain ATCC BAA-163 / DSM 7039 / HB27).